Here is a 203-residue protein sequence, read N- to C-terminus: High-molecular weight cobalt-containing nitrile hydratase subunit alpha (203 aa).

4 residues coordinate Co(3+): Cys102, Cys105, Ser106, and Cys107.

The protein belongs to the nitrile hydratase subunit alpha family. As to quaternary structure, heterodimer of an alpha and a beta chain. Requires Co(3+) as cofactor.

It catalyses the reaction an aliphatic primary amide = an aliphatic nitrile + H2O. In terms of biological role, NHase catalyzes the hydration of various nitrile compounds to the corresponding amides. The polypeptide is High-molecular weight cobalt-containing nitrile hydratase subunit alpha (nhhA) (Rhodococcus rhodochrous).